The chain runs to 292 residues: Retinal homeobox protein Rx3 (292 aa).

Residues 1–27 (MRLVGSQYKDMEDRLSPSARLVRSPGS) are disordered. An Octapeptide motif motif is present at residues 32–39 (HSIESILG). 2 disordered regions span residues 53-72 (GSGKTGKDTEHLSPKKDSNK) and 85-107 (SPDLPDADGGKLSDDENPKKKHR). Basic and acidic residues-rich tracts occupy residues 57–72 (TGKDTEHLSPKKDSNK) and 92–102 (DGGKLSDDENP). Positions 106–165 (HRRNRTTFTTFQLHELERAFEKSHYPDVYSREELALKVNLPEVRVQVWFQNRRAKWRRQE) form a DNA-binding region, homeobox. Positions 272 to 285 (TSIASLRMKAKEHI) match the OAR motif. Positions 278 to 282 (RMKAK) match the Nuclear localization signal motif.

It belongs to the paired homeobox family. Bicoid subfamily.

It localises to the nucleus. Functionally, plays a critical role in eye formation by regulating the initial specification of retinal cells and/or their subsequent proliferation. This Danio rerio (Zebrafish) protein is Retinal homeobox protein Rx3 (rx3).